Here is an 812-residue protein sequence, read N- to C-terminus: Endogenous retrovirus group K member 18 Pol protein (812 aa).

The region spanning 57–245 (LEKGHIEPSF…TPFHYLGMQI (189 aa)) is the Reverse transcriptase domain. Positions 161–164 (LPQG) match the LPQG motif. The short motif at 195-198 (YFDD) is the YXDD element. The RNase H type-1 domain maps to 460-590 (LENALTVFTD…ADLLVSSAFI (131 aa)). The Mg(2+) site is built by Asp-469, Glu-497, Asp-517, and Asp-582. The Integrase-type zinc-finger motif lies at 587–628 (SAFIKAQELHALTHVNAAGLKNKFDVTWKQAKDIVQHCTQCQ). Zn(2+) is bound by residues His-596, His-600, Cys-624, and Cys-627. The 167-residue stretch at 637–803 (AGVNPEVCVL…TSAEHLTGKK (167 aa)) folds into the Integrase catalytic domain.

Belongs to the beta type-B retroviral polymerase family. HERV class-II K(HML-2) pol subfamily.

It carries out the reaction DNA(n) + a 2'-deoxyribonucleoside 5'-triphosphate = DNA(n+1) + diphosphate. The enzyme catalyses Endonucleolytic cleavage to 5'-phosphomonoester.. Early post-infection, the reverse transcriptase converts the viral RNA genome into double-stranded viral DNA. The RNase H domain of the reverse transcriptase performs two functions. It degrades the RNA template and specifically removes the RNA primer from the RNA/DNA hybrid. Following nuclear import, the integrase catalyzes the insertion of the linear, double-stranded viral DNA into the host cell chromosome. Endogenous Pol proteins may have kept, lost or modified their original function during evolution. The chain is Endogenous retrovirus group K member 18 Pol protein (ERVK-18) from Homo sapiens (Human).